Here is a 424-residue protein sequence, read N- to C-terminus: L-threonine:uridine-5'-aldehyde transaldolase (424 aa).

Lys235 carries the N6-(pyridoxal phosphate)lysine modification.

The protein belongs to the SHMT family. Pyridoxal 5'-phosphate is required as a cofactor.

It catalyses the reaction uridine-5'-aldehyde + L-threonine = (5'S,6'S)-C-glycyluridine + acetaldehyde. Its pathway is antibiotic biosynthesis. Transaldolase involved in the biosynthesis of the lipopeptidyl nucleoside antibiotic A-90289. Catalyzes the condensation of L-threonine and uridine-5'-aldehyde to form 5'-C-glycyluridine (GlyU). Forms (5'S,6'S)-GlyU. Has no activity with alternative amino acids, such as glycine or serine. This chain is L-threonine:uridine-5'-aldehyde transaldolase, found in Streptomyces sp.